Here is a 111-residue protein sequence, read N- to C-terminus: uncharacterized protein (111 aa).

This is an uncharacterized protein from Methanocaldococcus jannaschii (strain ATCC 43067 / DSM 2661 / JAL-1 / JCM 10045 / NBRC 100440) (Methanococcus jannaschii).